The primary structure comprises 447 residues: Tubulin beta-2 chain (447 aa).

GTP-binding residues include Gln-11, Glu-69, Ser-138, Gly-142, Thr-143, Gly-144, Asn-204, and Asn-226. Glu-69 lines the Mg(2+) pocket. Positions 427-447 are disordered; sequence DASISEGEEEYEEEQQLENEE. Acidic residues predominate over residues 432-447; the sequence is EGEEEYEEEQQLENEE.

It belongs to the tubulin family. In terms of assembly, dimer of alpha and beta chains. A typical microtubule is a hollow water-filled tube with an outer diameter of 25 nm and an inner diameter of 15 nM. Alpha-beta heterodimers associate head-to-tail to form protofilaments running lengthwise along the microtubule wall with the beta-tubulin subunit facing the microtubule plus end conferring a structural polarity. Microtubules usually have 13 protofilaments but different protofilament numbers can be found in some organisms and specialized cells. The cofactor is Mg(2+).

The protein resides in the cytoplasm. The protein localises to the cytoskeleton. In terms of biological role, tubulin is the major constituent of microtubules, a cylinder consisting of laterally associated linear protofilaments composed of alpha- and beta-tubulin heterodimers. Microtubules grow by the addition of GTP-tubulin dimers to the microtubule end, where a stabilizing cap forms. Below the cap, tubulin dimers are in GDP-bound state, owing to GTPase activity of alpha-tubulin. This chain is Tubulin beta-2 chain (TUB2), found in Erysiphe pisi (Pea powdery mildew).